Consider the following 282-residue polypeptide: Pantothenate synthetase (282 aa).

30-37 (MGYLHQGH) is an ATP binding site. Residue H37 is the Proton donor of the active site. Position 61 (Q61) interacts with (R)-pantoate. Beta-alanine is bound at residue Q61. 147-150 (GQKD) contributes to the ATP binding site. Q153 contributes to the (R)-pantoate binding site. Residues V176 and 184–187 (MSSR) contribute to the ATP site.

This sequence belongs to the pantothenate synthetase family. In terms of assembly, homodimer.

The protein resides in the cytoplasm. It carries out the reaction (R)-pantoate + beta-alanine + ATP = (R)-pantothenate + AMP + diphosphate + H(+). It participates in cofactor biosynthesis; (R)-pantothenate biosynthesis; (R)-pantothenate from (R)-pantoate and beta-alanine: step 1/1. Catalyzes the condensation of pantoate with beta-alanine in an ATP-dependent reaction via a pantoyl-adenylate intermediate. This chain is Pantothenate synthetase, found in Geotalea daltonii (strain DSM 22248 / JCM 15807 / FRC-32) (Geobacter daltonii).